The primary structure comprises 214 residues: uncharacterized protein (214 aa).

Transmembrane regions (helical) follow at residues 4–23 (VSIV…FSSF), 35–57 (SFVH…LGYY), 67–89 (QWMR…FLFT), 96–118 (VSLV…VHVY), 128–150 (ARVM…VSFS), 155–177 (LPLL…SATV), and 187–209 (TVVY…FFAV).

It is found in the cell membrane. This is an uncharacterized protein from Treponema pallidum (strain Nichols).